The primary structure comprises 164 residues: Dynein regulatory complex protein 8 (164 aa).

2 consecutive EF-hand domains span residues 16–51 and 94–129; these read ELHKKIKDAFEVFDHESNNTVDVREIGTIIRSLGCC and AAEDILLRAFEVLDPAKRGFLTKDELVKYMTEEGEP.

This sequence belongs to the DRC8 family. As to quaternary structure, component of the nexin-dynein regulatory complex (N-DRC).

It localises to the cytoplasm. The protein resides in the cytoskeleton. Its subcellular location is the flagellum axoneme. Its function is as follows. Component of the nexin-dynein regulatory complex (N-DRC), a key regulator of ciliary/flagellar motility which maintains the alignment and integrity of the distal axoneme and regulates microtubule sliding in motile axonemes. The sequence is that of Dynein regulatory complex protein 8 (Efcab2) from Mus musculus (Mouse).